The following is a 259-amino-acid chain: Ribonuclease HII (259 aa).

The RNase H type-2 domain occupies 70 to 258 (TLIAGIDEVG…VKSLVLGKKE (189 aa)). Residues D76, E77, and D168 each contribute to the a divalent metal cation site.

This sequence belongs to the RNase HII family. It depends on Mn(2+) as a cofactor. Mg(2+) serves as cofactor.

The protein resides in the cytoplasm. It catalyses the reaction Endonucleolytic cleavage to 5'-phosphomonoester.. Its function is as follows. Endonuclease that specifically degrades the RNA of RNA-DNA hybrids. This Streptococcus pneumoniae serotype 4 (strain ATCC BAA-334 / TIGR4) protein is Ribonuclease HII.